The sequence spans 433 residues: CinA-like protein (433 aa).

The protein belongs to the CinA family.

The polypeptide is CinA-like protein (Frankia casuarinae (strain DSM 45818 / CECT 9043 / HFP020203 / CcI3)).